The sequence spans 207 residues: Redox-sensing transcriptional repressor Rex (207 aa).

A DNA-binding region (H-T-H motif) is located at residues 17–56 (IYLRYLSYLQQVEVTTVSSQQMGKNLDVNPAQIRKDLAAF). 91–96 (GAGHLG) serves as a coordination point for NAD(+).

It belongs to the transcriptional regulatory Rex family. In terms of assembly, homodimer.

Its subcellular location is the cytoplasm. In terms of biological role, modulates transcription in response to changes in cellular NADH/NAD(+) redox state. This chain is Redox-sensing transcriptional repressor Rex, found in Brevibacillus brevis (strain 47 / JCM 6285 / NBRC 100599).